We begin with the raw amino-acid sequence, 210 residues long: Ras-related protein Rab-2-B (210 aa).

13–21 is a GTP binding site; sequence GDTGVGKSC. The Effector region motif lies at 35-43; sequence HDLTIGVEF. GTP-binding positions include 61–65, 119–122, and 149–151; these read DTAGQ, NKCD, and SAK. Residues cysteine 208 and cysteine 209 are each lipidated (S-geranylgeranyl cysteine).

The protein belongs to the small GTPase superfamily. Rab family.

The protein resides in the endoplasmic reticulum membrane. It localises to the golgi apparatus membrane. In terms of biological role, protein transport. Probably involved in vesicular traffic. The chain is Ras-related protein Rab-2-B (RAB2B) from Zea mays (Maize).